The chain runs to 496 residues: Flotillin-like protein 3 (496 aa).

The S-palmitoyl cysteine moiety is linked to residue Cys37. Residues 301-328 adopt a coiled-coil conformation; the sequence is VVREAELQLEVERKNALRLTEKLKAEKL.

It belongs to the band 7/mec-2 family. Flotillin subfamily. In terms of processing, may be palmitoylated.

The protein resides in the cell membrane. The protein localises to the membrane. It localises to the caveola. May act as a scaffolding protein within caveolar membranes, functionally participating in formation of caveolae or caveolae-like vesicles. The polypeptide is Flotillin-like protein 3 (FLOT3) (Oryza sativa subsp. japonica (Rice)).